Reading from the N-terminus, the 102-residue chain is Small ribosomal subunit protein eS24 (102 aa).

This sequence belongs to the eukaryotic ribosomal protein eS24 family.

This chain is Small ribosomal subunit protein eS24, found in Methanobrevibacter smithii (strain ATCC 35061 / DSM 861 / OCM 144 / PS).